Here is a 278-residue protein sequence, read N- to C-terminus: Msm operon regulatory protein (278 aa).

The HTH araC/xylS-type domain maps to 176 to 274 (NQVKKIIHSQ…GKSPSKFRKE (99 aa)). 2 consecutive DNA-binding regions (H-T-H motif) follow at residues 193-214 (NDIA…RKST) and 241-264 (IAEI…KNYF).

Functionally, regulatory protein for the msm operon for multiple sugar metabolism. Activates the transcription of the msmEFGK, aga, dexB and gftA genes. The sequence is that of Msm operon regulatory protein (msmR) from Streptococcus mutans serotype c (strain ATCC 700610 / UA159).